The following is a 476-amino-acid chain: NAC domain-containing protein 86 (476 aa).

Residues Leu-6–Lys-157 form the NAC domain. The DNA-binding element occupies Ile-105–Lys-163.

As to expression, expressed in a few sieve element cells before enucleation and in phloem-pole pericycle cells.

It localises to the nucleus. Its function is as follows. Transcription factor directing sieve element enucleation and cytosol degradation. Not required for formation of lytic vacuoles. Regulates, with NAC045, the transcription of NEN1, NEN2, NEN3, NEN4, RTM1, RTM2, UBP16, PLDZETA, ABCB10 and At1g26450. The chain is NAC domain-containing protein 86 from Arabidopsis thaliana (Mouse-ear cress).